The primary structure comprises 409 residues: Phosphoserine phosphatase SerB2 (409 aa).

ACT domains follow at residues 8 to 86 (LITV…RSDD) and 102 to 174 (GRPI…DYGL). The active-site Nucleophile is the Asp185. 2 residues coordinate Mg(2+): Asp185 and Asp187. Catalysis depends on Asp187, which acts as the Proton donor. Substrate contacts are provided by residues Glu194, Arg230, 273-274 (SG), and Lys318. Asp341 contributes to the Mg(2+) binding site. Asn344 lines the substrate pocket.

This sequence belongs to the HAD-like hydrolase superfamily. SerB family. As to quaternary structure, homodimer. The dimeric population shifts to a tetramer in the presence of L-serine, which inactivates the enzyme. Requires Mg(2+) as cofactor. The cofactor is Mn(2+).

Its subcellular location is the secreted. It is found in the host cytoplasm. It localises to the host cytosol. It carries out the reaction O-phospho-L-serine + H2O = L-serine + phosphate. The catalysed reaction is O-phospho-D-serine + H2O = D-serine + phosphate. The enzyme catalyses O-phospho-L-seryl-[protein] + H2O = L-seryl-[protein] + phosphate. It catalyses the reaction O-phospho-L-threonyl-[protein] + H2O = L-threonyl-[protein] + phosphate. The protein operates within amino-acid biosynthesis; L-serine biosynthesis; L-serine from 3-phospho-D-glycerate: step 3/3. Its activity is regulated as follows. Clofazimine, a drug being evaluated for XDR and MDR tuberculosis, inhibits SerB2 phosphatase activity and reverses the various functional effects described above and interactions with host proteins. Is inhibited by known PSP inhibitors such as chlorpromazine, DL-AP3 and sodium orthovanadate, but not by okadaic acid. By binding to the ACT domains, amino-acids have various effects on enzyme activity: L-serine and L-glycine act as inhibitors, whereas L-lysine, L-tyrosine and L-phenylalanine are activators. High throughput screen has been performed to identify specific PSP inhibitors with activity against intracellular bacteria; the two best hits identified in this screen, clorobiocin and rosaniline, are bactericidal and kill bacteria in infected macrophages in a dose-dependent manner. Functionally, catalyzes the dephosphorylation of O-phospho-L-serine into L-serine, a step in the L-serine biosynthetic pathway. Exhibits high specificity for L-phosphoserine compared to substrates like L-phosphothreonine (5% relative activity) and L-phosphotyrosine (1.7% relative activity). Its function is as follows. In the host, induces significant cytoskeleton rearrangements through cofilin dephosphorylation and its subsequent activation, and affects the expression of genes that regulate actin dynamics. It specifically interacts with HSP90, HSP70 and HSP27 that block apoptotic pathways but not with other HSPs. Also interacts with GAPDH. It actively dephosphorylates MAP kinase p38 and NF-kappa B p65 (specifically at Ser-536) that play crucial roles in inflammatory and immune responses. This in turn leads to down-regulation of Interleukin 8, a chemotactic and inflammatory cytokine. Thus might help the pathogen to evade the host's immune response. Exogenous addition of purified SerB2 protein to human THP-1 cells (that can be differentiated into macrophage-like cells) induces microtubule rearrangements; the phosphatase activity is co-related to the elicited rearrangements, while addition of the ACT-domains alone elicits no rearrangements. In Mycobacterium tuberculosis (strain ATCC 25618 / H37Rv), this protein is Phosphoserine phosphatase SerB2.